Here is a 287-residue protein sequence, read N- to C-terminus: MQVQKSFKDKKTSGTLYLVPTPIGNLQDMTFRAVATLKEVDFICAEDTRNTGLLLKHFDIATKQISFHEHNAYEKIPDLIDLLISGRSLAQVSDAGMPSISDPGHDLVKAAIDSDIAVVALPGASAGITALIASGLAPQPHVFYGFLSRKAGQQKAFFEDKHHYPETQMFYESPYRIKDTLTNMLACYGDRQVVLVRELTKLFEEYQRGSISEILSYLEETSLKGECLLIVAGAQVDSEVELTADVDLVSLVQKEIQAGAKPNQAIKTIAKAYQVNRQELYQQFHDL.

This sequence belongs to the methyltransferase superfamily. RsmI family.

The protein resides in the cytoplasm. The catalysed reaction is cytidine(1402) in 16S rRNA + S-adenosyl-L-methionine = 2'-O-methylcytidine(1402) in 16S rRNA + S-adenosyl-L-homocysteine + H(+). Functionally, catalyzes the 2'-O-methylation of the ribose of cytidine 1402 (C1402) in 16S rRNA. The sequence is that of Ribosomal RNA small subunit methyltransferase I from Streptococcus pyogenes serotype M18 (strain MGAS8232).